Reading from the N-terminus, the 699-residue chain is 1,4-alpha-glucan-branching enzyme (699 aa).

Substrate is bound by residues 59–60 (NE) and 88–90 (WAP). Residue Trp104 participates in (1,4-alpha-D-glucosyl)n binding. 115 to 118 (DYGK) serves as a coordination point for substrate. Position 140 (Lys140) interacts with (1,4-alpha-D-glucosyl)n. The residue at position 170 (Tyr170) is a Phosphotyrosine. 330–333 (EVLR) is a binding site for substrate. Asp354 (nucleophile) is an active-site residue. Glu409 acts as the Proton donor in catalysis.

The protein belongs to the glycosyl hydrolase 13 family. GlgB subfamily. In terms of assembly, monomer.

It catalyses the reaction Transfers a segment of a (1-&gt;4)-alpha-D-glucan chain to a primary hydroxy group in a similar glucan chain.. It functions in the pathway glycan biosynthesis; glycogen biosynthesis. Functionally, glycogen-branching enzyme participates in the glycogen biosynthetic process along with glycogenin and glycogen synthase. Generates alpha-1,6-glucosidic branches from alpha-1,4-linked glucose chains, to increase solubility of the glycogen polymer. In Equus caballus (Horse), this protein is 1,4-alpha-glucan-branching enzyme (GBE1).